An 84-amino-acid chain; its full sequence is Small ribosomal subunit protein uS17 (84 aa).

It belongs to the universal ribosomal protein uS17 family. As to quaternary structure, part of the 30S ribosomal subunit.

One of the primary rRNA binding proteins, it binds specifically to the 5'-end of 16S ribosomal RNA. The chain is Small ribosomal subunit protein uS17 from Nitrosomonas europaea (strain ATCC 19718 / CIP 103999 / KCTC 2705 / NBRC 14298).